The following is an 855-amino-acid chain: Alanine--tRNA ligase (855 aa).

His-555, His-559, Cys-657, and His-661 together coordinate Zn(2+).

The protein belongs to the class-II aminoacyl-tRNA synthetase family. It depends on Zn(2+) as a cofactor.

The protein localises to the cytoplasm. The catalysed reaction is tRNA(Ala) + L-alanine + ATP = L-alanyl-tRNA(Ala) + AMP + diphosphate. Its function is as follows. Catalyzes the attachment of alanine to tRNA(Ala) in a two-step reaction: alanine is first activated by ATP to form Ala-AMP and then transferred to the acceptor end of tRNA(Ala). Also edits incorrectly charged Ser-tRNA(Ala) and Gly-tRNA(Ala) via its editing domain. In Wolinella succinogenes (strain ATCC 29543 / DSM 1740 / CCUG 13145 / JCM 31913 / LMG 7466 / NCTC 11488 / FDC 602W) (Vibrio succinogenes), this protein is Alanine--tRNA ligase.